The chain runs to 642 residues: Zinc finger protein 14 (642 aa).

Positions 4 to 76 constitute a KRAB domain; that stretch reads VSFEDVAVNF…MVERLCESRK (73 aa). The C2H2-type 1 zinc-finger motif lies at 103–125; it reads HECSFCGRDFMHHSSLNRHMRSH. The segment at 141-163 adopts a C2H2-type 2; degenerate zinc-finger fold; it reads RKHKAVEKTFSYHHCFRKHERTH. Residues 169–191 form a C2H2-type 3 zinc finger; that stretch reads YECKQCGKAFIYYQPFQRHERTH. The C2H2-type 4; atypical zinc-finger motif lies at 197–217; sequence YECKQCGKTFIYYQSFQQHAH. 15 consecutive C2H2-type zinc fingers follow at residues 223–245, 251–273, 279–301, 307–329, 335–357, 363–385, 391–413, 419–441, 447–469, 475–497, 503–525, 531–553, 559–581, 587–609, and 615–637; these read YECK…ERTH, YKCK…KRTH, YECK…VITH, YKCK…ERTH, YECK…ETTH, YECK…ERSH, YECK…EKIH, FECK…ERTH, YQCK…ERTH, and YRCK…ERSH.

This sequence belongs to the krueppel C2H2-type zinc-finger protein family.

It localises to the nucleus. In terms of biological role, may be involved in transcriptional regulation. This Pongo abelii (Sumatran orangutan) protein is Zinc finger protein 14 (ZNF14).